We begin with the raw amino-acid sequence, 129 residues long: uncharacterized protein (129 aa).

Belongs to the asfivirus C129R family.

It localises to the virion. Functionally, plays a role in the inhibition of type I interferon signaling pathway. Mechanistically, specifically interacts with 2',3'-cGAMP and cleaves it via its phosphodiesterase activity. In turn, prevents 2',3'-cGAMP interaction with host ER-resident STING1 leading to inhibition of downstream signaling pathway and type I interferon production. This is an uncharacterized protein from Ornithodoros (relapsing fever ticks).